Here is a 220-residue protein sequence, read N- to C-terminus: Probable acrEF/envCD operon repressor (220 aa).

Residues 10–70 form the HTH tetR-type domain; that stretch reads LKTRQELIET…EMWLQQPSLR (61 aa). Positions 33-52 form a DNA-binding region, H-T-H motif; sequence TLNDIADAANVTRGAIYWHF.

In terms of biological role, potential regulator protein for the acrEF/envCD genes. This chain is Probable acrEF/envCD operon repressor (envR), found in Escherichia coli O157:H7.